We begin with the raw amino-acid sequence, 225 residues long: DNA repair protein RecO (225 aa).

It belongs to the RecO family.

Involved in DNA repair and RecF pathway recombination. This is DNA repair protein RecO from Clostridium perfringens (strain ATCC 13124 / DSM 756 / JCM 1290 / NCIMB 6125 / NCTC 8237 / Type A).